A 282-amino-acid chain; its full sequence is uncharacterized protein (282 aa).

The 77-residue stretch at 4–80 (STLTSKLESL…VDYLSDEKQY (77 aa)) folds into the HTH rpiR-type domain. The H-T-H motif DNA-binding region spans 40–59 (VAELAQAAGVSSASVIRFTR). Residues 125 to 265 (IAQKIVEAKR…FFKYLTLTNE (141 aa)) form the SIS domain.

This is an uncharacterized protein from Providencia stuartii.